Reading from the N-terminus, the 1851-residue chain is Protein lap4 (1851 aa).

LRR repeat units lie at residues 38-59 (TLEE…FFRL), 61-82 (RLRK…IQNF), 84-105 (NLVE…IKHL), 107-128 (SLQV…FSQL), 130-152 (NLTV…GSLT), 153-174 (QLES…ISQL), 176-197 (KLKR…LGYL), 199-220 (GLHE…LGLL), 222-243 (KLTY…ISGL), 245-267 (SLTD…AKLS), 268-289 (RLTI…LGNC), 291-312 (NMQE…IGQM), 314-335 (KLNN…IGQC), 337-358 (NLGV…LGNC), 360-382 (VLHV…VNLQ), and 383-403 (LKAV…QPDT). Disordered regions lie at residues 427-474 (PARD…KDLK), 584-641 (VGGS…VQHL), and 656-719 (SQER…PDNL). Phosphoserine occurs at positions 433 and 435. The segment covering 438 to 461 (FEEREPSRTVVKFSEEATQEKETP) has biased composition (basic and acidic residues). Residues 471 to 492 (KDLKAKAQKLKVERSRNEEHAN) are a coiled coil. Acidic residues predominate over residues 589 to 601 (EVQDDDEQEDEFE). Positions 620–639 (RPPKLHRRDTPHHLKNKRVQ) are enriched in basic residues. Positions 656–672 (SQERNDTTPQHSLSGKV) are enriched in polar residues. Residues 676-686 (IEEEEQLEVEQ) are compositionally biased toward acidic residues. Residues 677 to 693 (EEEEQLEVEQEQQQQQQ) are a coiled coil. Phosphoserine is present on residues S700, S702, and S705. The region spanning 731-818 (EIHIERTAAG…VLVLVVQREV (88 aa)) is the PDZ 1 domain. 2 positions are modified to phosphoserine: S834 and S837. The PDZ 2 domain maps to 929 to 1019 (HTTLIRDQIG…FVRLVLQREY (91 aa)). Phosphoserine occurs at positions 1031 and 1041. Positions 1067-1150 (LATTTPTPKP…EAQPSSLRPL (84 aa)) are disordered. Composition is skewed to polar residues over residues 1080–1097 (ASIS…TNGF) and 1132–1149 (GSTT…SLRP). PDZ domains follow at residues 1239-1329 (EVVL…QHDP) and 1336-1428 (EVLL…CKGY). Residues 1448–1467 (NSSASCSGGSRQGSRASETG) show a composition bias toward polar residues. The interval 1448–1485 (NSSASCSGGSRQGSRASETGSELSQSQSVSSLDHEEDE) is disordered. Over residues 1468 to 1478 (SELSQSQSVSS) the composition is skewed to low complexity. 3 positions are modified to phosphoserine: S1475, S1477, and S1478. A Phosphothreonine modification is found at T1599. The segment covering 1647-1669 (AESANSAGAPSPAVPASTPGSAP) has biased composition (low complexity). 2 disordered regions span residues 1647–1751 (AESA…KVFS) and 1772–1851 (LRRD…VFRS). Positions 1725–1751 (VSDKKRFFESAMEDQHKPTQKTDKVFS) are enriched in basic and acidic residues. The stretch at 1753–1790 (LSKDEVEKLRQEEERKIATLRRDKNSRLLDAANDNIDK) forms a coiled coil. Residues 1807–1816 (DDNDDSDQEE) show a composition bias toward acidic residues. The span at 1831 to 1851 (HFDDAEDMRNPLDEIEAVFRS) shows a compositional bias: basic and acidic residues.

It belongs to the LAP (LRR and PDZ) protein family. During germ band extension, expression of isoform A occurs predominantly in neuroblasts derived from the neuro-ectoderm and later is restricted to CNS neurons and pole cells. Isoform C is strongly expressed in PNS and a subset of CNS neurons. In the adult, expressed in third antennal segment and maxillary palps, major olfactory organs and in Johnstons organ in the second antennal segment. Expression is also observed in cortical regions of the brain. Isoforms expressed in epithelia are coexpressed with dlg1 throughout development.

It localises to the cytoplasm. The protein localises to the apicolateral cell membrane. It is found in the cell junction. Its subcellular location is the septate junction. Required for polarization of the embryonic, imaginal disk and follicular epithelia. Specifically restricts apical membrane determinants to the apical cell surface; acts to exclude crb from the basolateral domain and define adherens junction position. Regulates cellular growth and differentiation; acts as a tumor suppressor. Essential for odor guided behavior. The polypeptide is Protein lap4 (Drosophila melanogaster (Fruit fly)).